Reading from the N-terminus, the 427-residue chain is Glutamate-1-semialdehyde 2,1-aminomutase (427 aa).

K265 is subject to N6-(pyridoxal phosphate)lysine.

It belongs to the class-III pyridoxal-phosphate-dependent aminotransferase family. HemL subfamily. In terms of assembly, homodimer. Requires pyridoxal 5'-phosphate as cofactor.

It localises to the cytoplasm. The catalysed reaction is (S)-4-amino-5-oxopentanoate = 5-aminolevulinate. It functions in the pathway porphyrin-containing compound metabolism; protoporphyrin-IX biosynthesis; 5-aminolevulinate from L-glutamyl-tRNA(Glu): step 2/2. The chain is Glutamate-1-semialdehyde 2,1-aminomutase from Burkholderia vietnamiensis (strain G4 / LMG 22486) (Burkholderia cepacia (strain R1808)).